The chain runs to 439 residues: uncharacterized protein (439 aa).

The YcaO domain maps to 116–439 (GKAASYRAAQ…PMRTPLQEAE (324 aa)).

This is an uncharacterized protein from Mycobacterium tuberculosis (strain CDC 1551 / Oshkosh).